The sequence spans 181 residues: Ribonuclease HII (181 aa).

In terms of domain architecture, RNase H type-2 spans 1–181; that stretch reads MICGIDEVGR…SLHRKNFKLI (181 aa). A divalent metal cation-binding residues include Asp-6, Glu-7, and Asp-98.

The protein belongs to the RNase HII family. The cofactor is Mn(2+). Mg(2+) serves as cofactor.

It localises to the cytoplasm. It carries out the reaction Endonucleolytic cleavage to 5'-phosphomonoester.. In terms of biological role, endonuclease that specifically degrades the RNA of RNA-DNA hybrids. This chain is Ribonuclease HII (rnhB), found in Borreliella burgdorferi (strain ATCC 35210 / DSM 4680 / CIP 102532 / B31) (Borrelia burgdorferi).